We begin with the raw amino-acid sequence, 427 residues long: Light-independent protochlorophyllide reductase subunit N (427 aa).

Cys-28, Cys-53, and Cys-114 together coordinate [4Fe-4S] cluster.

The protein belongs to the BchN/ChlN family. As to quaternary structure, protochlorophyllide reductase is composed of three subunits; BchL, BchN and BchB. Forms a heterotetramer of two BchB and two BchN subunits. Requires [4Fe-4S] cluster as cofactor.

The catalysed reaction is chlorophyllide a + oxidized 2[4Fe-4S]-[ferredoxin] + 2 ADP + 2 phosphate = protochlorophyllide a + reduced 2[4Fe-4S]-[ferredoxin] + 2 ATP + 2 H2O. It functions in the pathway porphyrin-containing compound metabolism; bacteriochlorophyll biosynthesis (light-independent). Its function is as follows. Component of the dark-operative protochlorophyllide reductase (DPOR) that uses Mg-ATP and reduced ferredoxin to reduce ring D of protochlorophyllide (Pchlide) to form chlorophyllide a (Chlide). This reaction is light-independent. The NB-protein (BchN-BchB) is the catalytic component of the complex. The sequence is that of Light-independent protochlorophyllide reductase subunit N from Jannaschia sp. (strain CCS1).